Here is a 441-residue protein sequence, read N- to C-terminus: Serine--tRNA ligase (441 aa).

250–252 (TSE) serves as a coordination point for L-serine. ATP is bound by residues 281–283 (RRE) and V297. L-serine is bound at residue E304. 368 to 371 (EIVS) contributes to the ATP binding site. T402 contacts L-serine.

Belongs to the class-II aminoacyl-tRNA synthetase family. Type-1 seryl-tRNA synthetase subfamily. Homodimer. The tRNA molecule binds across the dimer.

The protein resides in the cytoplasm. It catalyses the reaction tRNA(Ser) + L-serine + ATP = L-seryl-tRNA(Ser) + AMP + diphosphate + H(+). It carries out the reaction tRNA(Sec) + L-serine + ATP = L-seryl-tRNA(Sec) + AMP + diphosphate + H(+). Its pathway is aminoacyl-tRNA biosynthesis; selenocysteinyl-tRNA(Sec) biosynthesis; L-seryl-tRNA(Sec) from L-serine and tRNA(Sec): step 1/1. In terms of biological role, catalyzes the attachment of serine to tRNA(Ser). Is also able to aminoacylate tRNA(Sec) with serine, to form the misacylated tRNA L-seryl-tRNA(Sec), which will be further converted into selenocysteinyl-tRNA(Sec). This is Serine--tRNA ligase from Thermoplasma acidophilum (strain ATCC 25905 / DSM 1728 / JCM 9062 / NBRC 15155 / AMRC-C165).